The sequence spans 790 residues: Serine/threonine-protein kinase DCLK3 (790 aa).

Residues 1–37 are disordered; it reads MPAAPVLRPPPPPATPAPPAPSRPAPPIPGHRGPCDH. A compositionally biased stretch (pro residues) spans 7–29; it reads LRPPPPPATPAPPAPSRPAPPIP. Positions 97-183 constitute a Doublecortin domain; that stretch reads RVVTVVKLGG…KEPLTLKSIQ (87 aa). The span at 201–218 shows a compositional bias: low complexity; the sequence is HSRVPSPRLRSRLPSKLL. Disordered regions lie at residues 201–290 and 315–506; these read HSRV…SGEK and LQLG…KGII. Basic and acidic residues-rich tracts occupy residues 332 to 345, 352 to 400, 425 to 434, and 457 to 496; these read DLGR…EKLV, RPSE…ESQD, IDMRREDRHT, and TRGE…ERPS. Positions 514–771 constitute a Protein kinase domain; that stretch reads YDIGGVIGDG…AEQVLQHPWI (258 aa). Residues 520–528 and lysine 543 contribute to the ATP site; that span reads IGDGNFATV. Aspartate 635 serves as the catalytic Proton acceptor.

It belongs to the protein kinase superfamily. CAMK Ser/Thr protein kinase family. CaMK subfamily. Highly expressed in brain and to a lower extent in liver and kidney.

It localises to the cytoplasm. The protein resides in the nucleus. It catalyses the reaction L-seryl-[protein] + ATP = O-phospho-L-seryl-[protein] + ADP + H(+). It carries out the reaction L-threonyl-[protein] + ATP = O-phospho-L-threonyl-[protein] + ADP + H(+). This is Serine/threonine-protein kinase DCLK3 (Dclk3) from Mus musculus (Mouse).